The following is a 752-amino-acid chain: F-box and WD repeat domain containing protein 10B (752 aa).

WD repeat units lie at residues 169–206 (GLNQ…TSLP), 451–490 (GHAG…CTRI), 493–532 (GHQG…KTFR), 534–569 (KDPI…LVKT), 572–609 (GHEG…ERCL), and 611–652 (AFKH…KVIK).

In terms of tissue distribution, expressed in pancreas, heart and skeletal muscle.

The polypeptide is F-box and WD repeat domain containing protein 10B (Homo sapiens (Human)).